The sequence spans 415 residues: Serine hydroxymethyltransferase (415 aa).

(6S)-5,6,7,8-tetrahydrofolate-binding positions include Leu-120 and 124 to 126; that span reads GHL. Lys-229 bears the N6-(pyridoxal phosphate)lysine mark.

Belongs to the SHMT family. Homodimer. The cofactor is pyridoxal 5'-phosphate.

Its subcellular location is the cytoplasm. It catalyses the reaction (6R)-5,10-methylene-5,6,7,8-tetrahydrofolate + glycine + H2O = (6S)-5,6,7,8-tetrahydrofolate + L-serine. It participates in one-carbon metabolism; tetrahydrofolate interconversion. It functions in the pathway amino-acid biosynthesis; glycine biosynthesis; glycine from L-serine: step 1/1. In terms of biological role, catalyzes the reversible interconversion of serine and glycine with tetrahydrofolate (THF) serving as the one-carbon carrier. This reaction serves as the major source of one-carbon groups required for the biosynthesis of purines, thymidylate, methionine, and other important biomolecules. Also exhibits THF-independent aldolase activity toward beta-hydroxyamino acids, producing glycine and aldehydes, via a retro-aldol mechanism. This Caldicellulosiruptor bescii (strain ATCC BAA-1888 / DSM 6725 / KCTC 15123 / Z-1320) (Anaerocellum thermophilum) protein is Serine hydroxymethyltransferase.